The chain runs to 123 residues: Fluoride-specific ion channel FluC (123 aa).

Helical transmembrane passes span 5-25 (VWVA…YKFV), 33-53 (LATF…IGAF), 62-82 (LKLA…TFAA), and 94-114 (ITAF…VALG). The Na(+) site is built by Gly72 and Ser75.

Belongs to the fluoride channel Fluc/FEX (TC 1.A.43) family.

Its subcellular location is the cell inner membrane. It carries out the reaction fluoride(in) = fluoride(out). Its activity is regulated as follows. Na(+) is not transported, but it plays an essential structural role and its presence is essential for fluoride channel function. Fluoride-specific ion channel. Important for reducing fluoride concentration in the cell, thus reducing its toxicity. The chain is Fluoride-specific ion channel FluC from Ignicoccus hospitalis (strain KIN4/I / DSM 18386 / JCM 14125).